We begin with the raw amino-acid sequence, 122 residues long: UPF0102 protein ECH_0093 (122 aa).

Belongs to the UPF0102 family.

The chain is UPF0102 protein ECH_0093 from Ehrlichia chaffeensis (strain ATCC CRL-10679 / Arkansas).